The following is a 366-amino-acid chain: Molybdopterin synthase catalytic subunit (366 aa).

Residues 101 to 102, Lys-117, and 124 to 126 contribute to the substrate site; these read HR and KKE.

The protein belongs to the MoaE family. MOCS2B subfamily. In terms of assembly, heterotetramer; composed of 2 small (Mocs2A) and 2 large (Mocs2B) subunits.

It localises to the cytoplasm. The catalysed reaction is 2 [molybdopterin-synthase sulfur-carrier protein]-C-terminal-Gly-aminoethanethioate + cyclic pyranopterin phosphate + H2O = molybdopterin + 2 [molybdopterin-synthase sulfur-carrier protein]-C-terminal Gly-Gly + 2 H(+). The protein operates within cofactor biosynthesis; molybdopterin biosynthesis. Functionally, catalytic subunit of the molybdopterin synthase complex, a complex that catalyzes the conversion of precursor Z into molybdopterin. Acts by mediating the incorporation of 2 sulfur atoms from thiocarboxylated Mocs2A into precursor Z to generate a dithiolene group. This chain is Molybdopterin synthase catalytic subunit, found in Drosophila mojavensis (Fruit fly).